We begin with the raw amino-acid sequence, 430 residues long: Nitroalkane oxidase (430 aa).

FAD is bound by residues 132 to 135, 140 to 142, 170 to 172, Arg301, Gln311, 372 to 376, and 397 to 401; these read LVFS, VAN, WAT, NAVGI, and IFDGG. The active-site Proton acceptor is the Asp399.

Belongs to the acyl-CoA dehydrogenase family. In terms of assembly, homotetramer. The cofactor is FAD.

It catalyses the reaction a primary nitroalkane + O2 + H2O = an aldehyde + nitrite + H2O2 + H(+). It carries out the reaction a secondary nitroalkane + O2 + H2O = a ketone + nitrite + H2O2 + H(+). Its function is as follows. Nitroalkane oxidase (NAO) catalyzes the oxidation of nitroalkanes to the corresponding aldehydes or ketones with the release of nitrite and the consumption of molecular oxygen to yield hydrogen peroxide. NAO is unusual, since it catalyzes substrate oxidation by removing a substrate proton to form a carbanion intermediate. Prefers longer nitroalkanes, with 1-nitrohexane having the highest activity. This chain is Nitroalkane oxidase, found in Podospora anserina (strain S / ATCC MYA-4624 / DSM 980 / FGSC 10383) (Pleurage anserina).